Consider the following 376-residue polypeptide: Queuine tRNA-ribosyltransferase (376 aa).

The active-site Proton acceptor is Asp89. Substrate-binding positions include 89–93, Asp143, Gln187, and Gly214; that span reads DSGGF. An RNA binding region spans residues 245 to 251; that stretch reads GVGKPQD. Asp264 serves as the catalytic Nucleophile. Residues 269–273 are RNA binding; important for wobble base 34 recognition; that stretch reads TRNAR. 4 residues coordinate Zn(2+): Cys302, Cys304, Cys307, and His333.

This sequence belongs to the queuine tRNA-ribosyltransferase family. As to quaternary structure, homodimer. Within each dimer, one monomer is responsible for RNA recognition and catalysis, while the other monomer binds to the replacement base PreQ1. The cofactor is Zn(2+).

The enzyme catalyses 7-aminomethyl-7-carbaguanine + guanosine(34) in tRNA = 7-aminomethyl-7-carbaguanosine(34) in tRNA + guanine. It functions in the pathway tRNA modification; tRNA-queuosine biosynthesis. Catalyzes the base-exchange of a guanine (G) residue with the queuine precursor 7-aminomethyl-7-deazaguanine (PreQ1) at position 34 (anticodon wobble position) in tRNAs with GU(N) anticodons (tRNA-Asp, -Asn, -His and -Tyr). Catalysis occurs through a double-displacement mechanism. The nucleophile active site attacks the C1' of nucleotide 34 to detach the guanine base from the RNA, forming a covalent enzyme-RNA intermediate. The proton acceptor active site deprotonates the incoming PreQ1, allowing a nucleophilic attack on the C1' of the ribose to form the product. After dissociation, two additional enzymatic reactions on the tRNA convert PreQ1 to queuine (Q), resulting in the hypermodified nucleoside queuosine (7-(((4,5-cis-dihydroxy-2-cyclopenten-1-yl)amino)methyl)-7-deazaguanosine). This Erwinia tasmaniensis (strain DSM 17950 / CFBP 7177 / CIP 109463 / NCPPB 4357 / Et1/99) protein is Queuine tRNA-ribosyltransferase.